We begin with the raw amino-acid sequence, 99 residues long: Small ribosomal subunit protein bS20 (99 aa).

It belongs to the bacterial ribosomal protein bS20 family.

In terms of biological role, binds directly to 16S ribosomal RNA. This Synechococcus sp. (strain CC9311) protein is Small ribosomal subunit protein bS20.